The primary structure comprises 60 residues: Cytotoxin 6 (60 aa).

Cystine bridges form between Cys3–Cys21, Cys14–Cys38, Cys42–Cys53, and Cys54–Cys59.

Belongs to the three-finger toxin family. Short-chain subfamily. Type IA cytotoxin sub-subfamily. Monomer in solution; Homodimer and oligomer in the presence of negatively charged lipids forming a pore with a size ranging between 20 and 30 Angstroms. As to expression, expressed by the venom gland.

The protein localises to the secreted. Its subcellular location is the target cell membrane. Functionally, shows cytolytic activity on many different cells by forming pore in lipid membranes. In vivo, increases heart rate or kills the animal by cardiac arrest. In addition, it binds to heparin with high affinity, interacts with Kv channel-interacting protein 1 (KCNIP1) in a calcium-independent manner, and binds to integrin alpha-V/beta-3 (ITGAV/ITGB3) with moderate affinity. In Naja annulifera (Banded Egyptian cobra), this protein is Cytotoxin 6.